The chain runs to 450 residues: Protein tweety homolog 1 (450 aa).

The Extracellular segment spans residues 1–43 (MGAPPGYRPSAWVHLLHQLPRADFQLRPVPSGFAPRDQEYQQA). The chain crosses the membrane as a helical span at residues 44-64 (LLLVAALAGLGLGLSLIFIAV). Residues 65–88 (YLIRFCCCRPPEPPGAKSPPPGGG) lie on the Cytoplasmic side of the membrane. The chain crosses the membrane as a helical span at residues 89 to 109 (CVTWSCIAALLVGCAGIGIGF). The Extracellular portion of the chain corresponds to 110–214 (YGNSETSDGV…DVTFVEEYRW (105 aa)). The N-linked (GlcNAc...) asparagine glycan is linked to Asn130. The helical transmembrane segment at 215–235 (LAYVLLLLLVLLVCLFTLLGL) threads the bilayer. Residues 236–240 (AKQSK) are Cytoplasmic-facing. The helical transmembrane segment at 241–261 (WLVVVMTAMSLLVLVLSWGSM) threads the bilayer. At 262–390 (GLEAATAVGL…LRGLCEDALE (129 aa)) the chain is on the extracellular side. Disulfide bonds link Cys275/Cys385 and Cys303/Cys370. N-linked (GlcNAc...) asparagine glycans are attached at residues Asn284 and Asn355. The helical transmembrane segment at 391 to 411 (GLLFLMLFSLLSAGALATTLC) threads the bilayer. Topologically, residues 412 to 450 (SLPRAWALFPPSDDYDDTDDDDPFNPQESKRFVQWQSSI) are cytoplasmic. A disordered region spans residues 428-450 (DTDDDDPFNPQESKRFVQWQSSI). Ser440 carries the post-translational modification Phosphoserine.

This sequence belongs to the tweety family. As to quaternary structure, homotetramer; disulfide-linked. Homodimer. N-glycosylated. Contains high-mannose, hybrid and complex oligosaccharides.

The protein localises to the cell membrane. It carries out the reaction chloride(in) = chloride(out). It catalyses the reaction L-glutamate(out) = L-glutamate(in). Calcium-independent, swelling-dependent volume-regulated anion channel (VRAC-swell) which plays a pivotal role in the process of regulatory volume decrease (RVD) in the brain through the efflux of anions like chloride and organic osmolytes like glutamate. In Rattus norvegicus (Rat), this protein is Protein tweety homolog 1 (Ttyh1).